Reading from the N-terminus, the 505-residue chain is RNA-splicing ligase RtcB homolog (505 aa).

Mn(2+) is bound by residues Asp-119, Cys-122, His-227, His-259, and His-353. 226–230 (NHYAE) provides a ligand contact to GMP. GMP-binding positions include 353 to 354 (HN), 402 to 405 (GGSM), Ser-409, 428 to 431 (HGAG), and Lys-504. The active-site GMP-histidine intermediate is the His-428.

The protein belongs to the RtcB family. Catalytic component of the tRNA-splicing ligase complex. The cofactor is Mn(2+).

It localises to the nucleus. The protein resides in the cytoplasm. The enzyme catalyses a 3'-end 3'-phospho-ribonucleotide-RNA + a 5'-end dephospho-ribonucleoside-RNA + GTP = a ribonucleotidyl-ribonucleotide-RNA + GMP + diphosphate. It carries out the reaction a 3'-end 2',3'-cyclophospho-ribonucleotide-RNA + a 5'-end dephospho-ribonucleoside-RNA + GTP + H2O = a ribonucleotidyl-ribonucleotide-RNA + GMP + diphosphate + H(+). Its function is as follows. Catalytic subunit of the tRNA-splicing ligase complex that acts by directly joining spliced tRNA halves to mature-sized tRNAs. Required for the ligation of mRNAs and specifically, regulates xbp-1 mRNA splicing during the endoplasmic reticulum stress-induced unfolded protein response. Has a neuroprotective role in the age-dependent degeneration of dopamine neurons, which is mediated by xbp-1. In Caenorhabditis elegans, this protein is RNA-splicing ligase RtcB homolog.